The primary structure comprises 806 residues: Plasminogen (806 aa).

Residues Met1–Gly19 form the signal peptide. The region spanning Glu20–Ile98 is the PAN domain. 21 cysteine pairs are disulfide-bonded: Cys49-Cys73, Cys53-Cys61, Cys103-Cys181, Cys124-Cys164, Cys152-Cys176, Cys185-Cys262, Cys188-Cys316, Cys206-Cys245, Cys234-Cys257, Cys275-Cys352, Cys296-Cys335, Cys324-Cys347, Cys371-Cys448, Cys392-Cys431, Cys420-Cys443, Cys476-Cys555, Cys497-Cys538, Cys526-Cys550, Cys563-Cys681, Cys573-Cys581, and Cys603-Cys619. Kringle domains follow at residues Asp102–Cys181, Glu184–Cys262, Gln274–Cys352, Glu370–Cys448, and Asp475–Cys555. The Peptidase S1 domain maps to Ile577–Lys804. Phosphoserine is present on Ser593. Active-site charge relay system residues include His618 and Asp661. Residue Ser684 is modified to Phosphoserine. 3 disulfides stabilise this stretch: Cys695/Cys762, Cys725/Cys741, and Cys752/Cys780. Ser756 (charge relay system) is an active-site residue.

It belongs to the peptidase S1 family. Plasminogen subfamily. Interacts with CSPG4 and AMOT. Interacts (via the Kringle domains) with HRG; the interaction tethers PLG to the cell surface and enhances its activation. Interacts (via Kringle 4 domain) with ADA; the interaction stimulates PLG activation when in complex with DPP4. Angiostatin: Interacts with ATP5F1A; the interaction inhibits most of the angiogenic effects of angiostatin. In the presence of the inhibitor, the activation involves only cleavage after Arg-576, yielding two chains held together by two disulfide bonds. In the absence of the inhibitor, the activation involves additionally the removal of the activation peptide.

The protein localises to the secreted. The enzyme catalyses Preferential cleavage: Lys-|-Xaa &gt; Arg-|-Xaa, higher selectivity than trypsin. Converts fibrin into soluble products.. Converted into plasmin by plasminogen activators, both plasminogen and its activator being bound to fibrin. Activated with catalytic amounts of streptokinase. In terms of biological role, plasmin dissolves the fibrin of blood clots and acts as a proteolytic factor in a variety of other processes including embryonic development, tissue remodeling, tumor invasion, and inflammation. In ovulation, weakens the walls of the Graafian follicle. It activates the urokinase-type plasminogen activator, collagenases and several complement zymogens, such as C1, C4 and C5. Cleavage of fibronectin and laminin leads to cell detachment and apoptosis. Also cleaves fibrin, thrombospondin and von Willebrand factor. Its role in tissue remodeling and tumor invasion may be modulated by CSPG4. Binds to cells. In Notamacropus eugenii (Tammar wallaby), this protein is Plasminogen (PLG).